Reading from the N-terminus, the 403-residue chain is Tyrosine--tRNA ligase (403 aa).

The short motif at 42 to 51 is the 'HIGH' region element; the sequence is PTAPDLHLGH. Positions 226–230 match the 'KMSKS' region motif; it reads KMSKS. Lysine 229 serves as a coordination point for ATP. An S4 RNA-binding domain is found at 339–400; sequence LRLAGLLTAA…GKRNFARVLL (62 aa).

This sequence belongs to the class-I aminoacyl-tRNA synthetase family. TyrS type 2 subfamily. In terms of assembly, homodimer.

It localises to the cytoplasm. It carries out the reaction tRNA(Tyr) + L-tyrosine + ATP = L-tyrosyl-tRNA(Tyr) + AMP + diphosphate + H(+). Catalyzes the attachment of tyrosine to tRNA(Tyr) in a two-step reaction: tyrosine is first activated by ATP to form Tyr-AMP and then transferred to the acceptor end of tRNA(Tyr). The protein is Tyrosine--tRNA ligase of Xanthomonas euvesicatoria pv. vesicatoria (strain 85-10) (Xanthomonas campestris pv. vesicatoria).